The primary structure comprises 248 residues: Protein GrpE (248 aa).

The segment at 229-248 (AAPKEDTLPAQENQSSPADS) is disordered. Polar residues predominate over residues 238 to 248 (AQENQSSPADS).

Belongs to the GrpE family. Homodimer.

The protein resides in the cytoplasm. In terms of biological role, participates actively in the response to hyperosmotic and heat shock by preventing the aggregation of stress-denatured proteins, in association with DnaK and GrpE. It is the nucleotide exchange factor for DnaK and may function as a thermosensor. Unfolded proteins bind initially to DnaJ; upon interaction with the DnaJ-bound protein, DnaK hydrolyzes its bound ATP, resulting in the formation of a stable complex. GrpE releases ADP from DnaK; ATP binding to DnaK triggers the release of the substrate protein, thus completing the reaction cycle. Several rounds of ATP-dependent interactions between DnaJ, DnaK and GrpE are required for fully efficient folding. The polypeptide is Protein GrpE (Nostoc sp. (strain PCC 7120 / SAG 25.82 / UTEX 2576)).